The primary structure comprises 142 residues: Large ribosomal subunit protein uL13 (142 aa).

This sequence belongs to the universal ribosomal protein uL13 family. Part of the 50S ribosomal subunit.

Its function is as follows. This protein is one of the early assembly proteins of the 50S ribosomal subunit, although it is not seen to bind rRNA by itself. It is important during the early stages of 50S assembly. The chain is Large ribosomal subunit protein uL13 from Aeromonas salmonicida (strain A449).